Here is a 502-residue protein sequence, read N- to C-terminus: Probable glycine dehydrogenase (decarboxylating) subunit 2 (502 aa).

Position 273 is an N6-(pyridoxal phosphate)lysine (Lys273).

It belongs to the GcvP family. C-terminal subunit subfamily. In terms of assembly, the glycine cleavage system is composed of four proteins: P, T, L and H. In this organism, the P 'protein' is a heterodimer of two subunits. Requires pyridoxal 5'-phosphate as cofactor.

It carries out the reaction N(6)-[(R)-lipoyl]-L-lysyl-[glycine-cleavage complex H protein] + glycine + H(+) = N(6)-[(R)-S(8)-aminomethyldihydrolipoyl]-L-lysyl-[glycine-cleavage complex H protein] + CO2. The glycine cleavage system catalyzes the degradation of glycine. The P protein binds the alpha-amino group of glycine through its pyridoxal phosphate cofactor; CO(2) is released and the remaining methylamine moiety is then transferred to the lipoamide cofactor of the H protein. This is Probable glycine dehydrogenase (decarboxylating) subunit 2 from Pyrococcus furiosus (strain ATCC 43587 / DSM 3638 / JCM 8422 / Vc1).